The sequence spans 335 residues: Histidinol-phosphate aminotransferase (335 aa).

Residue K202 is modified to N6-(pyridoxal phosphate)lysine.

This sequence belongs to the class-II pyridoxal-phosphate-dependent aminotransferase family. Histidinol-phosphate aminotransferase subfamily. Homodimer. Pyridoxal 5'-phosphate is required as a cofactor.

The enzyme catalyses L-histidinol phosphate + 2-oxoglutarate = 3-(imidazol-4-yl)-2-oxopropyl phosphate + L-glutamate. The protein operates within amino-acid biosynthesis; L-histidine biosynthesis; L-histidine from 5-phospho-alpha-D-ribose 1-diphosphate: step 7/9. This Thermotoga neapolitana (strain ATCC 49049 / DSM 4359 / NBRC 107923 / NS-E) protein is Histidinol-phosphate aminotransferase.